The primary structure comprises 275 residues: Exosome complex component Rrp42 (275 aa).

This sequence belongs to the RNase PH family. Rrp42 subfamily. Component of the archaeal exosome complex. Forms a hexameric ring-like arrangement composed of 3 Rrp41-Rrp42 heterodimers. The hexameric ring associates with a trimer of Rrp4 and/or Csl4 subunits.

It is found in the cytoplasm. In terms of biological role, non-catalytic component of the exosome, which is a complex involved in RNA degradation. Contributes to the structuring of the Rrp41 active site. The polypeptide is Exosome complex component Rrp42 (Saccharolobus islandicus (strain L.S.2.15 / Lassen #1) (Sulfolobus islandicus)).